Here is a 259-residue protein sequence, read N- to C-terminus: MLLAIDCGNTNTVFSIWDGEKFLCTLRTSTHHARTADAYFTWYSTLIKHYGIETDITDVIISSTVPRVVFNLRVFADRFFGCRPLVVGKPDCLLPVQPRVDAGTAVGPDRLVNAAAAYDRHGGNKIVVDFGTATTFDVVDDDGAYVGGVIAPGVNLSLEALHMAAAALPHVDIAKPQAVIGTNTVACMQSGVFWGYVGLVKEICARIKGERDRDMQVIATGGLAALFQQSEILFDIFEDDLTMHGLTVIHRHNKENGTV.

Residue 6–13 (DCGNTNTV) participates in ATP binding. 107-110 (GPDR) contributes to the substrate binding site. Aspartate 109 (proton acceptor) is an active-site residue. A K(+)-binding site is contributed by aspartate 129. Position 132 (threonine 132) interacts with ATP. Threonine 184 is a binding site for substrate.

This sequence belongs to the type III pantothenate kinase family. As to quaternary structure, homodimer. The cofactor is NH4(+). It depends on K(+) as a cofactor.

It is found in the cytoplasm. The enzyme catalyses (R)-pantothenate + ATP = (R)-4'-phosphopantothenate + ADP + H(+). The protein operates within cofactor biosynthesis; coenzyme A biosynthesis; CoA from (R)-pantothenate: step 1/5. Its function is as follows. Catalyzes the phosphorylation of pantothenate (Pan), the first step in CoA biosynthesis. This chain is Type III pantothenate kinase, found in Ruegeria pomeroyi (strain ATCC 700808 / DSM 15171 / DSS-3) (Silicibacter pomeroyi).